A 793-amino-acid polypeptide reads, in one-letter code: Plakophilin-3 (793 aa).

The segment at 56-82 (QLGQQPRHNGPAEPDGAAEAARGASRA) is disordered. A compositionally biased stretch (low complexity) spans 66-82 (PAEPDGAAEAARGASRA). Arg81 carries the omega-N-methylarginine modification. Ser122, Ser179, and Ser182 each carry phosphoserine. Tyr194 is modified (phosphotyrosine). Residues 221-240 (SSSRAGGLDWPEATEGPPSR) form a disordered region. Residue Ser239 is modified to Phosphoserine. Thr249 is subject to Phosphothreonine. The residue at position 260 (Arg260) is an Omega-N-methylarginine. Ser282, Ser310, Ser311, and Ser328 each carry phosphoserine. Positions 282-285 (SLSL) are required for interaction with SFN. The interval 291–720 (LPDMRGLDSY…ADVLINIIAV (430 aa)) is required for interaction with GSK3B. ARM repeat units follow at residues 302–345 (GHRT…HKCY), 348–387 (AAAKKQARSLQAVPRLVKLFNHANQEVQRHATGAMRNLVY), 390–429 (ADNKLALVEENGIFELLRALREQDDELRKNVTGILWNLSS), 446–484 (TDLVLSPLSGAGGPPLIQQNASEAEIFYNATGFLRNLSS), 488–533 (ATRQ…NLSY), 592–633 (PKGL…NITA), 641–680 (VLSRLALEQERILNPLLDRVRTADHHQLRSLTGLIRNLSR), and 685–726 (KDEM…NLVV). Residues 513–793 (VGKCEDKSVE…GYRKEDFLGP (281 aa)) are required for binding to PKP2 mRNA.

The protein belongs to the beta-catenin family. In terms of assembly, found in a complex composed of CDH1, RAP1A and PKP3; PKP3 acts as a scaffold protein within the complex, the complex is required for CDH1 localization to mature desmosome cell junctions. Interacts with FXR1; the interaction facilitates the binding of PKP3 to PKP2 mRNA. Interacts (via ARM repeats) with GSK3B; the interaction may be involved in PKP3 protein degradation. Interacts with hyperphosphorylated and hypophosphorylated RB1; the interaction inhibits RB1 interaction with and repression of the transcription factor E2F1, potentially via sequestering RB1 to the cytoplasm. Interacts with CDKN1A; the interaction sequesters CDKN1A to the cytoplasm thereby repressing its role as an inhibitor of CDK4- and CDK6-driven RB1 phosphorylation. Interacts (via N-terminus) with SFN; the interaction maintains the cytoplasmic pool of PKP3, facilitates PKP3 exchange at desmosomes and restricts PKP3 localization to existing desmosome cell junctions. Interacts (via N-terminus) with SFN; the interaction maintains the cytoplasmic pool of PKP3 and restricts PKP3 localization to existing desmosome cell junctions. Interacts (via N-terminus) with JUP; the interaction is required for PKP3 localization to desmosome cell-cell junctions. Post-translationally, phosphorylated at Ser-282 when localized to the cytoplasm, PKP3 at desmosome cell junctions is not phosphorylated. Phosphorylation at Try-194 by SRC is induced by reactive oxygen species and potentially acts as a release mechanism from desmosome cell-cell junctions.

The protein resides in the nucleus. Its subcellular location is the cell junction. The protein localises to the desmosome. It localises to the cytoplasm. It is found in the cell membrane. The protein resides in the adherens junction. In terms of biological role, a component of desmosome cell-cell junctions which are required for positive regulation of cellular adhesion. Required for the localization of DSG2, DSP and PKP2 to mature desmosome junctions. May also play a role in the maintenance of DSG3 protein abundance in keratinocytes. Required for the formation of DSP-containing desmosome precursors in the cytoplasm during desmosome assembly. Also regulates the accumulation of CDH1 to mature desmosome junctions, via cAMP-dependent signaling and its interaction with activated RAP1A. Positively regulates the stabilization of PKP2 mRNA and therefore protein abundance, via its interaction with FXR1, may also regulate the protein abundance of DSP via the same mechanism. May also regulate the protein abundance of the desmosome component PKP1. Required for the organization of desmosome junctions at intercellular borders between basal keratinocytes of the epidermis, as a result plays a role in maintenance of the dermal barrier and regulation of the dermal inflammatory response. Required during epidermal keratinocyte differentiation for cell adherence at tricellular cell-cell contacts, via regulation of the timely formation of adherens junctions and desmosomes in a calcium-dependent manner, and may also play a role in the organization of the intracellular actin fiber belt. Acts as a negative regulator of the inflammatory response in hematopoietic cells of the skin and intestine, via modulation of proinflammatory cytokine production. Important for epithelial barrier maintenance in the intestine to reduce intestinal permeability, thereby plays a role in protection from intestinal-derived endotoxemia. Required for the development of hair follicles, via a role in the regulation of inner root sheaf length, correct alignment and anterior-posterior polarity of hair follicles. Promotes proliferation and cell-cycle G1/S phase transition of keratinocytes. Promotes E2F1-driven transcription of G1/S phase promoting genes by acting to release E2F1 from its inhibitory interaction with RB1, via sequestering RB1 and CDKN1A to the cytoplasm and thereby increasing CDK4- and CDK6-driven phosphorylation of RB1. May act as a scaffold protein to facilitate MAPK phosphorylation of RPS6KA protein family members and subsequently promote downstream EGFR signaling. May play a role in the positive regulation of transcription of Wnt-mediated TCF-responsive target genes. The sequence is that of Plakophilin-3 (PKP3) from Bos taurus (Bovine).